The chain runs to 419 residues: MNLTALKNMPVSELITLGEKMGLENLARMRKQDIIFAILKQHAKSGEDIFGDGVLEILQDGFGFLRSADSSYLAGPDDIYVSPSQIRRFNLRTGDTIAGKIRPPKEGERYFALLKVNEVNYDKPENARSKILFENLTPLHANSRLRMERGNGSTEDLTARVLDLASPIGRGQRGLIVAPPKAGKTILLQNIAQSIAYNHPDCVLMVLLIDERPEEVTEMQRLVKGEVVASTFDEPASRHVQVAEMVIEKAKRLVEHKKDVIILLDSITRLARAYNTVVPASGKVLTGGVDANALHRPKRFFGAARNVEEGGSLTIIATALVDTGSKMDEVIYEEFKGTGNMELPLSRKIAEKRVFPAIDYNRSGTRKEELLTLPDELQKMWILRKIIHPMSEIDAMEFLLNKLAMTKTNDEFFDMMKRS.

The region spanning 48–123 is the Rho RNA-BD domain; the sequence is DIFGDGVLEI…LKVNEVNYDK (76 aa). 3 RNA-binding regions span residues 61 to 66, 78 to 80, and 108 to 110; these read GFGFLR, DIY, and ERY. ATP contacts are provided by residues 169 to 174, 181 to 186, and Arg-212; these read GRGQRG and KAGKTI. The RNA-binding 2 stretch occupies residues 284–288; sequence VLTGG.

This sequence belongs to the Rho family. As to quaternary structure, homohexamer. The homohexamer assembles into an open ring structure.

Functionally, facilitates transcription termination by a mechanism that involves Rho binding to the nascent RNA, activation of Rho's RNA-dependent ATPase activity, and release of the mRNA from the DNA template. The polypeptide is Transcription termination factor Rho (Buchnera aphidicola subsp. Acyrthosiphon pisum (strain APS) (Acyrthosiphon pisum symbiotic bacterium)).